The chain runs to 43 residues: Protein PsbN (43 aa).

The helical transmembrane segment at 5–27 (ALVAISISRLLVSFTGYALYTAF) threads the bilayer.

It belongs to the PsbN family.

The protein resides in the plastid. The protein localises to the chloroplast thylakoid membrane. May play a role in photosystem I and II biogenesis. The chain is Protein PsbN from Bowenia serrulata (Byfield fern).